The primary structure comprises 370 residues: 3-isopropylmalate dehydrogenase (370 aa).

77–90 (GPKWDSVPYEVRPE) provides a ligand contact to NAD(+). Substrate-binding residues include Arg-97, Arg-107, Arg-135, and Asp-226. Positions 226, 250, and 254 each coordinate Mg(2+). Residue 290–302 (GSAPDIAGKGIAN) coordinates NAD(+).

The protein belongs to the isocitrate and isopropylmalate dehydrogenases family. LeuB type 1 subfamily. As to quaternary structure, homodimer. Mg(2+) serves as cofactor. The cofactor is Mn(2+).

It localises to the cytoplasm. It carries out the reaction (2R,3S)-3-isopropylmalate + NAD(+) = 4-methyl-2-oxopentanoate + CO2 + NADH. It functions in the pathway amino-acid biosynthesis; L-leucine biosynthesis; L-leucine from 3-methyl-2-oxobutanoate: step 3/4. Functionally, catalyzes the oxidation of 3-carboxy-2-hydroxy-4-methylpentanoate (3-isopropylmalate) to 3-carboxy-4-methyl-2-oxopentanoate. The product decarboxylates to 4-methyl-2 oxopentanoate. The polypeptide is 3-isopropylmalate dehydrogenase (Brucella suis biovar 1 (strain 1330)).